The chain runs to 353 residues: Lipase-specific foldase (353 aa).

The Cytoplasmic segment spans residues 1 to 19 (MAQADRPARGGLAARPMRG). Residues 20 to 40 (ASFALAGLVACAACAAVVLWL) form a helical membrane-spanning segment. Residues 41–353 (RPAAPSPAPA…AASLDRGAGG (313 aa)) are Periplasmic-facing.

Belongs to the lipase chaperone family. Monomer. Interacts with lipase (lip).

It is found in the cell inner membrane. Involved in the folding of the extracellular lipase (lip) during its passage through the periplasm. This Burkholderia plantarii protein is Lipase-specific foldase.